Consider the following 932-residue polypeptide: Beta-mannosidase A (932 aa).

The first 19 residues, 1–19 (MRVPAQATIAVLASAVSSP), serve as a signal peptide directing secretion. N-linked (GlcNAc...) asparagine glycans are attached at residues asparagine 41, asparagine 81, asparagine 94, asparagine 249, asparagine 261, asparagine 284, asparagine 289, asparagine 318, and asparagine 348. The active-site Proton donor is glutamate 480. 8 N-linked (GlcNAc...) asparagine glycosylation sites follow: asparagine 538, asparagine 551, asparagine 609, asparagine 624, asparagine 632, asparagine 659, asparagine 739, and asparagine 791.

It belongs to the glycosyl hydrolase 2 family. Beta-mannosidase A subfamily. In terms of assembly, homodimer.

The protein resides in the secreted. It carries out the reaction Hydrolysis of terminal, non-reducing beta-D-mannose residues in beta-D-mannosides.. The protein operates within glycan metabolism; N-glycan degradation. Exoglycosidase that cleaves the single beta-linked mannose residue from the non-reducing end of beta-mannosidic oligosaccharides of various complexity and length. Involved in the degradation of polymeric mannan and galactomannan. The protein is Beta-mannosidase A (mndA) of Aspergillus terreus (strain NIH 2624 / FGSC A1156).